Consider the following 339-residue polypeptide: MAAVRGSPPEYKVRAVEEIKRMISSKPVVAIVSFRNVPAGQMQKIRREFRGKAEIKVVKNTLLERALDALGGDYLKLKDYLGDQIAIITADENPFRLFRMIEDTKVPSPLKPNQVSPVDVVVNEGPTPIPPGPLMAELQMAGLPVAIEKGKVVVKATTTVVKAGEVVRPEVARALERLDIKPIKIGLDVKAMLDSGVILTPETLAIDTEKVLEDFQRAYQMALNLAVNSAYVTEETAEILIMKAVMDARNLAINAGIFEKGVMEDILMKAHAEMLSLASLLPDEALDEELKSMLSGIAEAAAQATPSVEEREEEEKPEEEEEEEEKEEEAIEGLGALFG.

Residues 300–339 form a disordered region; the sequence is AAAQATPSVEEREEEEKPEEEEEEEEKEEEAIEGLGALFG. Residues 310-331 are compositionally biased toward acidic residues; the sequence is EREEEEKPEEEEEEEEKEEEAI.

Belongs to the universal ribosomal protein uL10 family. As to quaternary structure, part of the 50S ribosomal subunit. Forms part of the ribosomal stalk which helps the ribosome interact with GTP-bound translation factors. Forms a heptameric L10(L12)2(L12)2(L12)2 complex, where L10 forms an elongated spine to which the L12 dimers bind in a sequential fashion.

Its function is as follows. Forms part of the ribosomal stalk, playing a central role in the interaction of the ribosome with GTP-bound translation factors. This is Large ribosomal subunit protein uL10 from Archaeoglobus fulgidus (strain ATCC 49558 / DSM 4304 / JCM 9628 / NBRC 100126 / VC-16).